The sequence spans 214 residues: tRNA (guanine-N(7)-)-methyltransferase (214 aa).

4 residues coordinate S-adenosyl-L-methionine: Glu44, Glu69, Asp96, and Asp118. Asp118 is an active-site residue. Residues Lys122, Asp154, and 191–194 (TEYE) contribute to the substrate site.

Belongs to the class I-like SAM-binding methyltransferase superfamily. TrmB family.

The enzyme catalyses guanosine(46) in tRNA + S-adenosyl-L-methionine = N(7)-methylguanosine(46) in tRNA + S-adenosyl-L-homocysteine. It participates in tRNA modification; N(7)-methylguanine-tRNA biosynthesis. Catalyzes the formation of N(7)-methylguanine at position 46 (m7G46) in tRNA. This is tRNA (guanine-N(7)-)-methyltransferase from Listeria welshimeri serovar 6b (strain ATCC 35897 / DSM 20650 / CCUG 15529 / CIP 8149 / NCTC 11857 / SLCC 5334 / V8).